A 277-amino-acid chain; its full sequence is NH(3)-dependent NAD(+) synthetase (277 aa).

Residue 36-43 participates in ATP binding; it reads GLSGGIDS. D42 is a Mg(2+) binding site. R118 lines the deamido-NAD(+) pocket. Position 138 (T138) interacts with ATP. E143 lines the Mg(2+) pocket. Residues K167 and S189 each coordinate ATP.

This sequence belongs to the NAD synthetase family. In terms of assembly, homodimer.

It catalyses the reaction deamido-NAD(+) + NH4(+) + ATP = AMP + diphosphate + NAD(+) + H(+). The protein operates within cofactor biosynthesis; NAD(+) biosynthesis; NAD(+) from deamido-NAD(+) (ammonia route): step 1/1. Functionally, catalyzes the ATP-dependent amidation of deamido-NAD to form NAD. Uses ammonia as a nitrogen source. In Chlorobaculum tepidum (strain ATCC 49652 / DSM 12025 / NBRC 103806 / TLS) (Chlorobium tepidum), this protein is NH(3)-dependent NAD(+) synthetase.